A 688-amino-acid polypeptide reads, in one-letter code: Collagen alpha-2(IX) chain (688 aa).

Positions 1 to 22 (MTAVPAPRSLFVLLQVLWLALA) are cleaved as a signal peptide. The triple-helical region 4 (COL4) stretch occupies residues 26 to 162 (GPPGEPGPPG…PGKPGRPGTI (137 aa)). Positions 26-171 (GPPGEPGPPG…IQGLEGSADF (146 aa)) are disordered. Composition is skewed to pro residues over residues 28–42 (PGEP…PPGV) and 105–126 (LPGP…PGPV). Residues 128 to 137 (LPGEIGTPGP) are compositionally biased toward low complexity. Positions 138 to 156 (KGDPGPEGPSGPPGPPGKP) are enriched in pro residues. Position 159 is a 4-hydroxyproline (Pro159). Residues 163 to 179 (QGLEGSADFLCPTNCPA) form a nonhelical region 4 (NC4) region. Residue Ser168 is glycosylated (O-linked (Xyl...) (glycosaminoglycan) serine). The tract at residues 180 to 518 (GVKGPQGLQG…PGRQGVVGRA (339 aa)) is triple-helical region 3 (COL3). Lys182 is subject to 5-hydroxylysine. Lys182 carries O-linked (Gal...) hydroxylysine glycosylation. A disordered region spans residues 183–517 (GPQGLQGVKG…QPGRQGVVGR (335 aa)). 2 stretches are compositionally biased toward low complexity: residues 289 to 314 (PQGI…PGIP) and 392 to 412 (RGPV…EQGP). A compositionally biased stretch (gly residues) spans 435-444 (GPRGGVGDPG). Over residues 502–517 (DRGVPGQPGRQGVVGR) the composition is skewed to low complexity. The segment at 519-548 (ASDQHIVDVVLKMIQEQLAEVAVSAKREAL) is nonhelical region 3 (NC3). A triple-helical region 2 (COL2) region spans residues 549–631 (GAAGMVGLPG…PGLPGRPGQA (83 aa)). The tract at residues 553–664 (MVGLPGPPGP…GPVGLPGFCE (112 aa)) is disordered. Residues 598-610 (KRGEKGDRGEMGH) show a composition bias toward basic and acidic residues. A nonhelical region 2 (NC2) region spans residues 632 to 633 (IN). Positions 634–663 (GKDGDRGSPGAPGEAGRPGRPGPVGLPGFC) are triple-helical region 1 (COL1). Positions 664–688 (EPAACLGASAYTSARLTEPGSIKGP) are nonhelical region 1 (NC1).

Belongs to the fibril-associated collagens with interrupted helices (FACIT) family. Heterotrimer of an alpha 1(IX), an alpha 2(IX) and an alpha 3(IX) chain. The chains are linked to each other by interchain disulfide bonds. Trimers are also cross-linked via hydroxylysines. Post-translationally, covalently linked to the telopeptides of type II collagen by lysine-derived cross-links. In terms of processing, prolines at the third position of the tripeptide repeating unit (G-X-Y) are hydroxylated in some or all of the chains.

The protein localises to the secreted. It is found in the extracellular space. It localises to the extracellular matrix. Its function is as follows. Structural component of hyaline cartilage and vitreous of the eye. The chain is Collagen alpha-2(IX) chain (Col9a2) from Mus musculus (Mouse).